A 385-amino-acid chain; its full sequence is 1-deoxy-D-xylulose 5-phosphate reductoisomerase (385 aa).

Residues threonine 13, glycine 14, serine 15, isoleucine 16, asparagine 40, and asparagine 122 each contribute to the NADPH site. Lysine 123 contacts 1-deoxy-D-xylulose 5-phosphate. Glutamate 124 serves as a coordination point for NADPH. Aspartate 148 contributes to the Mn(2+) binding site. 4 residues coordinate 1-deoxy-D-xylulose 5-phosphate: serine 149, glutamate 150, serine 177, and histidine 200. Glutamate 150 is a Mn(2+) binding site. Glycine 206 contacts NADPH. 1-deoxy-D-xylulose 5-phosphate is bound by residues serine 213, asparagine 218, lysine 219, and glutamate 222. Glutamate 222 lines the Mn(2+) pocket.

The protein belongs to the DXR family. Mg(2+) serves as cofactor. It depends on Mn(2+) as a cofactor.

It carries out the reaction 2-C-methyl-D-erythritol 4-phosphate + NADP(+) = 1-deoxy-D-xylulose 5-phosphate + NADPH + H(+). The protein operates within isoprenoid biosynthesis; isopentenyl diphosphate biosynthesis via DXP pathway; isopentenyl diphosphate from 1-deoxy-D-xylulose 5-phosphate: step 1/6. Catalyzes the NADPH-dependent rearrangement and reduction of 1-deoxy-D-xylulose-5-phosphate (DXP) to 2-C-methyl-D-erythritol 4-phosphate (MEP). The chain is 1-deoxy-D-xylulose 5-phosphate reductoisomerase from Francisella tularensis subsp. tularensis (strain WY96-3418).